Reading from the N-terminus, the 714-residue chain is Cell wall protein IFF7 (714 aa).

Residues 1-19 (MLFTLSILSTLLFSTSISA) form the signal peptide. N-linked (GlcNAc...) asparagine glycosylation is present at N200. A compositionally biased stretch (polar residues) spans 320–330 (GPVPSQKSLPS). 2 disordered regions span residues 320–633 (GPVP…AADS) and 660–692 (PIAN…ANGS). The span at 346 to 504 (GSSSSSSVVS…SSTPLSGDSS (159 aa)) shows a compositional bias: low complexity. N-linked (GlcNAc...) asparagine glycans are attached at residues N390, N394, N399, N421, and N473. Polar residues predominate over residues 505–519 (QVSSLTTGTSPDTIA). Residues 520–544 (SFQTDSTSFGFGSGSPSSGAVQSSG) show a composition bias toward low complexity. Polar residues predominate over residues 545 to 558 (VTNSTPNTGDVNTQ). 2 stretches are compositionally biased toward low complexity: residues 559-590 (SNTA…TTTG) and 597-625 (NNNN…NTNN). N577, N621, N624, and N663 each carry an N-linked (GlcNAc...) asparagine glycan. The span at 665 to 679 (SSSPSSSSSSSSSSS) shows a compositional bias: low complexity. N-linked (GlcNAc...) asparagine glycosylation is present at N690. N690 carries GPI-anchor amidated asparagine lipidation. The propeptide at 691-714 (GSSKLSIGMTFMISGFATMFALFM) is removed in mature form.

This sequence belongs to the HYR1/IFF family. Post-translationally, the GPI-anchor is attached to the protein in the endoplasmic reticulum and serves to target the protein to the cell surface. There, the glucosamine-inositol phospholipid moiety is cleaved off and the GPI-modified mannoprotein is covalently attached via its lipidless GPI glycan remnant to the 1,6-beta-glucan of the outer cell wall layer.

It is found in the secreted. Its subcellular location is the cell wall. The protein resides in the membrane. In terms of biological role, GPI-anchored cell wall protein involved in cell wall organization, hyphal growth, as well as in host-fungal interaction and virulence. The sequence is that of Cell wall protein IFF7 (IFF8) from Candida albicans (strain SC5314 / ATCC MYA-2876) (Yeast).